Consider the following 464-residue polypeptide: Protein FAM90A24 (464 aa).

3 disordered regions span residues 1 to 42, 69 to 389, and 415 to 437; these read MMAR…DPRL, VPAT…HDGA, and HSPE…SEAP. Basic and acidic residues-rich tracts occupy residues 74–89 and 97–114; these read GKKE…KPRG and NKDK…DPQR. Residues 180–197 are compositionally biased toward low complexity; sequence LASLSPLRKASLSSSSSL.

This sequence belongs to the FAM90 family.

The chain is Protein FAM90A24 from Homo sapiens (Human).